Reading from the N-terminus, the 337-residue chain is Exopolysaccharide phosphotransferase cps2G (337 aa).

It belongs to the stealth family.

This chain is Exopolysaccharide phosphotransferase cps2G (cps2G), found in Lactiplantibacillus plantarum (strain ATCC BAA-793 / NCIMB 8826 / WCFS1) (Lactobacillus plantarum).